We begin with the raw amino-acid sequence, 257 residues long: Thiazole synthase (257 aa).

Lys-96 serves as the catalytic Schiff-base intermediate with DXP. Residues Gly-157, 184–185 (AG), and 206–207 (NT) contribute to the 1-deoxy-D-xylulose 5-phosphate site.

This sequence belongs to the ThiG family. Homotetramer. Forms heterodimers with either ThiH or ThiS.

The protein resides in the cytoplasm. It carries out the reaction [ThiS sulfur-carrier protein]-C-terminal-Gly-aminoethanethioate + 2-iminoacetate + 1-deoxy-D-xylulose 5-phosphate = [ThiS sulfur-carrier protein]-C-terminal Gly-Gly + 2-[(2R,5Z)-2-carboxy-4-methylthiazol-5(2H)-ylidene]ethyl phosphate + 2 H2O + H(+). The protein operates within cofactor biosynthesis; thiamine diphosphate biosynthesis. Its function is as follows. Catalyzes the rearrangement of 1-deoxy-D-xylulose 5-phosphate (DXP) to produce the thiazole phosphate moiety of thiamine. Sulfur is provided by the thiocarboxylate moiety of the carrier protein ThiS. In vitro, sulfur can be provided by H(2)S. This is Thiazole synthase from Bartonella quintana (strain Toulouse) (Rochalimaea quintana).